The sequence spans 149 residues: Nucleoside diphosphate kinase (149 aa).

Residues Lys-9, Phe-57, Arg-85, Thr-91, Arg-102, and Asn-112 each coordinate ATP. His-115 acts as the Pros-phosphohistidine intermediate in catalysis.

Belongs to the NDK family. As to quaternary structure, homotetramer. Requires Mg(2+) as cofactor.

Its subcellular location is the cytoplasm. It carries out the reaction a 2'-deoxyribonucleoside 5'-diphosphate + ATP = a 2'-deoxyribonucleoside 5'-triphosphate + ADP. The enzyme catalyses a ribonucleoside 5'-diphosphate + ATP = a ribonucleoside 5'-triphosphate + ADP. Major role in the synthesis of nucleoside triphosphates other than ATP. The ATP gamma phosphate is transferred to the NDP beta phosphate via a ping-pong mechanism, using a phosphorylated active-site intermediate. The sequence is that of Nucleoside diphosphate kinase from Gloeobacter violaceus (strain ATCC 29082 / PCC 7421).